Reading from the N-terminus, the 53-residue chain is UPF0391 membrane protein YPTS_0599 (53 aa).

The next 2 membrane-spanning stretches (helical) occupy residues 4-24 and 27-47; these read WGIIFLIIALIAAALGFGGLA and AAWAAKVVFVVGIILFLISLF.

The protein belongs to the UPF0391 family.

The protein resides in the cell membrane. This chain is UPF0391 membrane protein YPTS_0599, found in Yersinia pseudotuberculosis serotype IB (strain PB1/+).